We begin with the raw amino-acid sequence, 1252 residues long: HEAT repeat-containing protein 6 (1252 aa).

The stretch at 230-269 (PDLLGKSGLLMKLSDVTHSDPEVRRAAVHCMANLCLSVPG) is one HEAT 1 repeat. The interval 365–417 (DGRSPVKPQQPESSAARPSANKKKKYKVKPKKTQQGEKAEEEEPYGEVDAAPG) is disordered. Residues 384-396 (ANKKKKYKVKPKK) show a composition bias toward basic residues. Residues serine 471 and serine 474 each carry the phosphoserine modification. HEAT repeat units lie at residues 524–562 (ELGSPQSVSLMTLTLKDPSPKTRACALQVLSAILEGSKQ), 586–624 (SSIRELHRCLLLALVAESSSQTLTQIIKCLANLVSNAPY), and 630–667 (SLLTKVWNHIKPYIRHKDVNVRVSSLTLLGAVVSTHAP). Residue threonine 689 is modified to Phosphothreonine. Serine 714 carries the post-translational modification Phosphoserine.

This chain is HEAT repeat-containing protein 6 (Heatr6), found in Rattus norvegicus (Rat).